Reading from the N-terminus, the 75-residue chain is Metallothionein-like protein 1 (75 aa).

The protein belongs to the metallothionein superfamily. Type 15 family.

Its function is as follows. Metallothioneins have a high content of cysteine residues that bind various heavy metals. The sequence is that of Metallothionein-like protein 1 from Cicer arietinum (Chickpea).